The sequence spans 132 residues: DNA-directed RNA polymerase subunit omega (132 aa).

Belongs to the RNA polymerase subunit omega family. As to quaternary structure, the RNAP catalytic core consists of 2 alpha, 1 beta, 1 beta' and 1 omega subunit. When a sigma factor is associated with the core the holoenzyme is formed, which can initiate transcription.

The enzyme catalyses RNA(n) + a ribonucleoside 5'-triphosphate = RNA(n+1) + diphosphate. In terms of biological role, promotes RNA polymerase assembly. Latches the N- and C-terminal regions of the beta' subunit thereby facilitating its interaction with the beta and alpha subunits. The sequence is that of DNA-directed RNA polymerase subunit omega from Bartonella bacilliformis (strain ATCC 35685 / KC583 / Herrer 020/F12,63).